A 324-amino-acid polypeptide reads, in one-letter code: MDEVCAAPAPKKMVAKSLVLNTFRKASVKEVVELKKPWKKVLWRKQDYPDNFIDESFLNGLQRNVNIQVTDFWSLVADSLPVSQHLSSVVIFASVFVSIYRNQLSCALVGFVSNVSAVAAFILWDFVLRKPCNNRTFPNYMGIVKSCILIVLTLAGLSPILMSLTKSTSPDSVWAIAVWLFLANVFFHEYTTETIRPHVRLHNSLSTNAALSASVVLASRLEKSINVFFFILFAVHWFALFPIFRKYIHVFSFYADMLMTLVLIISAYIALNAVASVVIAFVFLSLIFFISFICPIWFIKLQRFKNEIHGPWDIALPKLGPSKG.

Topologically, residues 1–79 (MDEVCAAPAP…TDFWSLVADS (79 aa)) are cytoplasmic. The chain crosses the membrane as a helical span at residues 80–100 (LPVSQHLSSVVIFASVFVSIY). The Lumenal segment spans residues 101–107 (RNQLSCA). The chain crosses the membrane as a helical span at residues 108 to 128 (LVGFVSNVSAVAAFILWDFVL). The Cytoplasmic portion of the chain corresponds to 129 to 140 (RKPCNNRTFPNY). Residues 141–161 (MGIVKSCILIVLTLAGLSPIL) traverse the membrane as a helical segment. The Lumenal segment spans residues 162-171 (MSLTKSTSPD). The chain crosses the membrane as a helical span at residues 172 to 192 (SVWAIAVWLFLANVFFHEYTT). The Cytoplasmic segment spans residues 193–223 (ETIRPHVRLHNSLSTNAALSASVVLASRLEK). A helical membrane pass occupies residues 224-244 (SINVFFFILFAVHWFALFPIF). The Lumenal portion of the chain corresponds to 245-250 (RKYIHV). The helical transmembrane segment at 251 to 271 (FSFYADMLMTLVLIISAYIAL) threads the bilayer. The Cytoplasmic segment spans residues 272 to 276 (NAVAS). A helical transmembrane segment spans residues 277 to 299 (VVIAFVFLSLIFFISFICPIWFI). At 300–324 (KLQRFKNEIHGPWDIALPKLGPSKG) the chain is on the lumenal side.

It belongs to the PIGC family.

Its subcellular location is the endoplasmic reticulum membrane. It catalyses the reaction a 1,2-diacyl-sn-glycero-3-phospho-(1D-myo-inositol) + UDP-N-acetyl-alpha-D-glucosamine = a 6-(N-acetyl-alpha-D-glucosaminyl)-1-(1,2-diacyl-sn-glycero-3-phospho)-1D-myo-inositol + UDP + H(+). The protein operates within glycolipid biosynthesis; glycosylphosphatidylinositol-anchor biosynthesis. Functionally, part of the complex catalyzing the transfer of N-acetylglucosamine from UDP-N-acetylglucosamine to phosphatidylinositol, the first step of GPI biosynthesis. This Schizosaccharomyces pombe (strain 972 / ATCC 24843) (Fission yeast) protein is Phosphatidylinositol N-acetylglucosaminyltransferase GPI2 subunit (gpi2).